A 440-amino-acid polypeptide reads, in one-letter code: MLTRFAPSPTGYLHVGNARTALVCWMYTRSQNGKFLLRFDDTDLQRSDVKHIDSIVQDLRWICIDWDVIFKQSERFKHYNEVFLQLITKGHIYACYETKEELDIKRKLQLKHGLPPVYDRSALLLTEQEKFCYEQEGRKPHFRFKLDRNEVVKWNDEVKGEINIATSSISDPVVKREDGIYTYMLPSVIDDVDFNVTHVIRGEDHVTNTAVQIQMIQALEAKVPVFAHLPLLHFDDSKISKRKGGLDIKSIKENEIEPMALASYLIKLGTSDPIEAYVNMQSLIDSFDIKKFGSASAQFNLSEIHKLNSKVLQQMPFEMVKERLSQIGVNSPEFWYFIRNNIEKFSEVAEWWQICKSNIEPVVLDKEFIKIVLDALPQGDCNENTLSEWVKAIQQTVDIKLKDLFMQLRLALTGAKTGPELAKLLIFIGKENIIARLKKY.

Residues 7–17 carry the 'HIGH' region motif; sequence PSPTGYLHVGN. The 'KMSKS' region motif lies at 238–242; it reads KISKR. Residue Lys241 participates in ATP binding.

Belongs to the class-I aminoacyl-tRNA synthetase family. Glutamate--tRNA ligase type 1 subfamily. In terms of assembly, monomer.

The protein resides in the cytoplasm. The enzyme catalyses tRNA(Glu) + L-glutamate + ATP = L-glutamyl-tRNA(Glu) + AMP + diphosphate. Its function is as follows. Catalyzes the attachment of glutamate to tRNA(Glu) in a two-step reaction: glutamate is first activated by ATP to form Glu-AMP and then transferred to the acceptor end of tRNA(Glu). The polypeptide is Glutamate--tRNA ligase 1 (Wolbachia sp. subsp. Brugia malayi (strain TRS)).